The following is a 320-amino-acid chain: Cytochrome f (320 aa).

Residues 1–35 form the signal peptide; that stretch reads MQTRKTLSWIKEEITRSISLSLMLSIITHASLSNA. Heme-binding residues include tyrosine 36, cysteine 56, cysteine 59, and histidine 60. The helical transmembrane segment at 286 to 306 threads the bilayer; sequence VQGLLFFLTSVLLAQIFLVLK.

The protein belongs to the cytochrome f family. In terms of assembly, the 4 large subunits of the cytochrome b6-f complex are cytochrome b6, subunit IV (17 kDa polypeptide, petD), cytochrome f and the Rieske protein, while the 4 small subunits are PetG, PetL, PetM and PetN. The complex functions as a dimer. Heme serves as cofactor.

It localises to the plastid. It is found in the chloroplast thylakoid membrane. Component of the cytochrome b6-f complex, which mediates electron transfer between photosystem II (PSII) and photosystem I (PSI), cyclic electron flow around PSI, and state transitions. In Pelargonium hortorum (Common geranium), this protein is Cytochrome f.